The chain runs to 298 residues: Elongation factor Ts (298 aa).

Positions 79–82 (TDFV) are involved in Mg(2+) ion dislocation from EF-Tu.

The protein belongs to the EF-Ts family.

Its subcellular location is the cytoplasm. Functionally, associates with the EF-Tu.GDP complex and induces the exchange of GDP to GTP. It remains bound to the aminoacyl-tRNA.EF-Tu.GTP complex up to the GTP hydrolysis stage on the ribosome. This chain is Elongation factor Ts (tsf), found in Mycoplasma pneumoniae (strain ATCC 29342 / M129 / Subtype 1) (Mycoplasmoides pneumoniae).